Reading from the N-terminus, the 431-residue chain is MPQLTKSAELFEKAKKFIPGGVNSPVRAFKSVGGTPVYMAKGSGAYMTDVDGNTYLDYVGSWGPFILGSMHPRITAALEYTLKNIGTSFGTPIEMEIEIAELLCKIVPSLEMVRMVNSGTEATMSAVRLARGYTGRDKIIKFEGCYHGHGDSFLIKAGSGALTLGAPDSPGVTKGTAMDTLNATYNDIDSVKLLVNENKGQIAAIIIEPVAGNTGVIPAKPGFLAALRELCTEEGIVLIFDEVMCGFRVALGGAQSLYGVTPDLTTMGKIIGGGLPVGAFGGKREIMERVAPLGDVYQAGTLSGNPLALTAGLETLKILIDENPYPELERKAVILESGFNDNLKKLGLNYVQNRVGSMSCLFFTETPVVDYSTAVTADTKRHGKYFHSMLDQGIYLAPSQFEAMFISFMHTDEDLEKTIKANYNALVASGQ.

The residue at position 269 (lysine 269) is an N6-(pyridoxal phosphate)lysine.

The protein belongs to the class-III pyridoxal-phosphate-dependent aminotransferase family. HemL subfamily. Homodimer. Pyridoxal 5'-phosphate is required as a cofactor.

Its subcellular location is the cytoplasm. It carries out the reaction (S)-4-amino-5-oxopentanoate = 5-aminolevulinate. It participates in porphyrin-containing compound metabolism; protoporphyrin-IX biosynthesis; 5-aminolevulinate from L-glutamyl-tRNA(Glu): step 2/2. It functions in the pathway porphyrin-containing compound metabolism; chlorophyll biosynthesis. This is Glutamate-1-semialdehyde 2,1-aminomutase from Pelodictyon phaeoclathratiforme (strain DSM 5477 / BU-1).